Consider the following 248-residue polypeptide: Peroxisomal membrane protein 11A (248 aa).

Over 1–97 (MATKAPEKIT…RSSRWDSNHE (97 aa)) the chain is Cytoplasmic. The helical transmembrane segment at 98-118 (LVLLIIAYGGEGLYYFVEQFI) threads the bilayer. Over 119–220 (WLTKSGLIDA…MTIADIRDGK (102 aa)) the chain is Lumenal. The chain crosses the membrane as a helical span at residues 221-241 (GVLSAPNVISSAGLFSAIVST). Over 242-248 (HKNWISC) the chain is Cytoplasmic.

This sequence belongs to the peroxin-11 family. As to quaternary structure, homooligomer. Interacts with ARC5 and FIS1B on peroxisomes. Expressed in developing siliques.

The protein resides in the peroxisome membrane. Its function is as follows. Involved in peroxisomal proliferation. Promotes peroxisomal duplication, aggregation or elongation without fission. In Arabidopsis thaliana (Mouse-ear cress), this protein is Peroxisomal membrane protein 11A (PEX11A).